The sequence spans 361 residues: S-adenosylmethionine decarboxylase proenzyme (361 aa).

Catalysis depends on residues Glu-11 and Glu-14. The active-site Schiff-base intermediate with substrate; via pyruvic acid is the Ser-71. The residue at position 71 (Ser-71) is a Pyruvic acid (Ser); by autocatalysis. Cys-85 functions as the Proton donor; for catalytic activity in the catalytic mechanism. Catalysis depends on proton acceptor; for processing activity residues Ser-234 and His-247.

Belongs to the eukaryotic AdoMetDC family. Pyruvate serves as cofactor. Post-translationally, is synthesized initially as an inactive proenzyme. Formation of the active enzyme involves a self-maturation process in which the active site pyruvoyl group is generated from an internal serine residue via an autocatalytic post-translational modification. Two non-identical subunits are generated from the proenzyme in this reaction, and the pyruvate is formed at the N-terminus of the alpha chain, which is derived from the carboxyl end of the proenzyme. The post-translation cleavage follows an unusual pathway, termed non-hydrolytic serinolysis, in which the side chain hydroxyl group of the serine supplies its oxygen atom to form the C-terminus of the beta chain, while the remainder of the serine residue undergoes an oxidative deamination to produce ammonia and the pyruvoyl group blocking the N-terminus of the alpha chain.

It catalyses the reaction S-adenosyl-L-methionine + H(+) = S-adenosyl 3-(methylsulfanyl)propylamine + CO2. It participates in amine and polyamine biosynthesis; S-adenosylmethioninamine biosynthesis; S-adenosylmethioninamine from S-adenosyl-L-methionine: step 1/1. This is S-adenosylmethionine decarboxylase proenzyme (SAMDC) from Daucus carota (Wild carrot).